A 468-amino-acid polypeptide reads, in one-letter code: O-methyltransferase lcsG (468 aa).

Residues 1-12 (MGDNVQSDTTAA) show a composition bias toward polar residues. A disordered region spans residues 1–29 (MGDNVQSDTTAAQAGITDAPTAPTSAPVS). S-adenosyl-L-methionine is bound by residues 298–299 (GG), D321, 348–349 (DF), and K363.

It belongs to the class I-like SAM-binding methyltransferase superfamily. Cation-independent O-methyltransferase family.

It functions in the pathway secondary metabolite biosynthesis. Its function is as follows. O-methyltransferase; part of the gene cluster that mediates the biosynthesis of the lipopeptide antibiotics leucinostatins that show extensive biological activities, including antimalarial, antiviral, antibacterial, antifungal, and antitumor activities, as well as phytotoxic. Leucinostatin A contains nine amino acid residues, including the unusual amino acid 4-methyl-L-proline (MePro), 2-amino-6-hydroxy-4-methyl-8-oxodecanoic acid (AHyMeOA), 3-hydroxyleucine (HyLeu), alpha-aminoisobutyric acid (AIB), beta-Ala, a 4-methylhex-2-enoic acid at the N-terminus as well as a N1,N1-dimethylpropane-1,2-diamine (DPD) at the C-terminus. The biosynthesis of leucinostatins is probably initiated with the assembly of 4-methylhex-2-enoic acid by a reducing PKS. Two reducing polyketide synthases, lcsB and lcsC, have been identified in the cluster and it is not clear which is the one that assembles 4-methylhex-2-enoic acid since both contain KS, AT, DH, cMT, ER, KR and ACP domains. The polyketide residue might be transferred to the NRPS lcsA, mediated by two additional enzymes, the acyl-CoA ligase lcsD and the thioesterase lcsE. The linear polyketide carboxylic acid, which is released from PKS, is converted to a CoA thioester by lcsD, and then lcsE hydrolyzes the thiol bond and shuttles the polyketide intermediate to lcsA. The C domain of the first module catalyzed the condensation of 4-methylhex-2-enoic acid and MePro carried by domain A1, followed by successive condensations of nine amino acids to trigger the elongation of the linear peptide. A5 and A6 domains of lcsA are proposed to incorporate leucine, A2 AHyMeOA, and A3 incorporates HyLeu. A4, A7 and A8 incorporate AIB. The AHyMeOA in leucinostatin A activated by the A2 might be produced by the second PKS (lcsB or lcsC) present within the cluster. The MePro is probably produced via leucine cyclization and may originate from a separate pathway, independent of the cluster. Another nonproteinogenic amino acid, beta-Ala, could be produced by an aspartic acid decarboxylase also localized outside of the cluster. Two candidates are VFPBJ_01400 and VFPBJ_10476. The final peptide scaffold may be released by the NAD(P)H-dependent thioester reductase (TE) at the C-terminal region of lcsA. Transamination of the lcsA product by the transaminase lcsP may produce DPD at the C-terminus. Further hydroxylation steps performed alternatively by the cytochrome P450 monooxygenases lcsI, lcsK and lcsN then yield the non-methylated leucinostatins precursor. It is also possible that leucines can be hydroxylated prior to their incorporation into the peptide. Varying extents of methylation then lead to the formation of leucinostatins A and B. This Purpureocillium lilacinum (Paecilomyces lilacinus) protein is O-methyltransferase lcsG.